Here is a 405-residue protein sequence, read N- to C-terminus: NADH-quinone oxidoreductase subunit D (405 aa).

This sequence belongs to the complex I 49 kDa subunit family. In terms of assembly, NDH-1 is composed of 14 different subunits. Subunits NuoB, C, D, E, F, and G constitute the peripheral sector of the complex.

The protein localises to the cell inner membrane. The enzyme catalyses a quinone + NADH + 5 H(+)(in) = a quinol + NAD(+) + 4 H(+)(out). In terms of biological role, NDH-1 shuttles electrons from NADH, via FMN and iron-sulfur (Fe-S) centers, to quinones in the respiratory chain. The immediate electron acceptor for the enzyme in this species is believed to be ubiquinone. Couples the redox reaction to proton translocation (for every two electrons transferred, four hydrogen ions are translocated across the cytoplasmic membrane), and thus conserves the redox energy in a proton gradient. The protein is NADH-quinone oxidoreductase subunit D of Afipia carboxidovorans (strain ATCC 49405 / DSM 1227 / KCTC 32145 / OM5) (Oligotropha carboxidovorans).